The sequence spans 529 residues: Na(+)/H(+) antiporter NhaB (529 aa).

12 consecutive transmembrane segments (helical) span residues 13–33 (FLGK…IINP), 34–54 (IVFF…EFIF), 90–110 (LVAN…IYFM), 113–133 (LLLF…ILSL), 136–156 (CFAA…AVVI), 205–225 (LLMH…VGEP), 241–261 (FLIR…LTCF), 306–326 (GLIA…VGLI), 327–347 (GLSV…HSLG), 351–371 (EEAL…AVII), 451–471 (ATPN…APLI), and 479–499 (VIMA…GIVF).

The protein belongs to the NhaB Na(+)/H(+) (TC 2.A.34) antiporter family.

It localises to the cell inner membrane. The catalysed reaction is 2 Na(+)(in) + 3 H(+)(out) = 2 Na(+)(out) + 3 H(+)(in). Its function is as follows. Na(+)/H(+) antiporter that extrudes sodium in exchange for external protons. The sequence is that of Na(+)/H(+) antiporter NhaB from Vibrio vulnificus (strain CMCP6).